We begin with the raw amino-acid sequence, 604 residues long: MMDLELPPPGLQSQQDMDLIDILWRQDIDLGVSREVFDFSQRQKDYELEKQKKLEKERQEQLQKEQEKAFFAQLQLDEETGEFLPIQPAQHIQTDTSGSVSYSQVAHIPKQDALYFEDCMQLLAETFPFVDDHEVSSPTFQSLALDIPSHVESSVFTTPDQAQSLDSSLETAMTDLSSIQQDMEQVWQELFSIPELQCLNTENKQQAETTTVPSPEATLTEMDSNYHFYSSIPSLEKEVDSCSPHFLHGFEDSFSSILSTDDASQLNSLDSNPTLNTDFGDEFYSAFLAEPSGGGSMPSSAAISQSLSELLGGPIEGCDLSLCKAFNQKHTEGTVEFNDSDSGISLNTSPSRASPEHSVESSIYGDPPPGFSDSEMEELDSAPGSVKQNGPKAQPTHSSGDTVQPLSPAQGHSAAVHESQCENTTKKEVPVSPGHQKVPFTKDKHSSRLEAHLTRDELRAKALHIPFPVEKIINLPVDDFNEMMSKEQFNEAQLALIRDIRRRGKNKVAAQNCRKRKLENIVELEQDLGHLKDEREKLLREKGENDRNLHLLKRKLSTLYLEVFSMLRDEDGKPYSPSEYSLQQTRDGNVFLVPKSKKPDTKKN.

A DLG motif motif is present at residues 29–31; that stretch reads DLG. Residue serine 40 is modified to Phosphoserine; by PKC. An ETGE motif motif is present at residues 79–82; sequence ETGE. Position 214 is a phosphoserine (serine 214). The interval 334–447 is disordered; the sequence is TVEFNDSDSG…VPFTKDKHSS (114 aa). 2 stretches are compositionally biased toward polar residues: residues 340–352 and 395–407; these read SDSG…SPSR and PTHS…QPLS. 3 N-linked (Glc) (glycation) lysine glycosylation sites follow: lysine 461, lysine 471, and lysine 486. A bZIP domain is found at 496-559; the sequence is LIRDIRRRGK…HLLKRKLSTL (64 aa). Arginine 498 is a glycosylation site (N-linked (Glc) (glycation) arginine). The basic motif stretch occupies residues 498-517; sequence RDIRRRGKNKVAAQNCRKRK. Positions 521–528 are leucine-zipper; that stretch reads IVELEQDL. N-linked (Glc) (glycation) arginine glycosylation is present at arginine 568. A disordered region spans residues 570–604; that stretch reads EDGKPYSPSEYSLQQTRDGNVFLVPKSKKPDTKKN. Lysine 573 carries an N-linked (Glc) (glycation) lysine glycan. Residues 578–587 are compositionally biased toward polar residues; that stretch reads SEYSLQQTRD. The mediates interaction with CHD6 and is necessary to activate transcription stretch occupies residues 590–595; it reads VFLVPK. Residues lysine 595 and lysine 598 each carry the N6-acetyllysine; by CREBBP modification.

It belongs to the bZIP family. CNC subfamily. In terms of assembly, heterodimer; heterodimerizes with small Maf proteins. Interacts (via the bZIP domain) with MAFG and MAFK; required for binding to antioxidant response elements (AREs) on DNA. Interacts with KEAP1; the interaction is direct and promotes ubiquitination by the BCR(KEAP1) E3 ubiquitin ligase complex. Forms a ternary complex with PGAM5 and KEAP1. Interacts with EEF1D at heat shock promoter elements (HSE). Interacts via its leucine-zipper domain with the coiled-coil domain of PMF1. Interacts with CHD6; involved in activation of the transcription. Interacts with ESRRB; represses NFE2L2 transcriptional activity. Interacts with MOTS-c, a peptide produced by the mitochondrially encoded 12S rRNA MT-RNR1; the interaction occurs in the nucleus following metabolic stress. Post-translationally, ubiquitinated in the cytoplasm by the BCR(KEAP1) E3 ubiquitin ligase complex leading to its degradation. In response to oxidative stress, electrophile metabolites, such as sulforaphane, modify KEAP1, leading to inhibit activity of the BCR(KEAP1) complex, promoting NFE2L2/NRF2 nuclear accumulation and activity. In response to autophagy, the BCR(KEAP1) complex is inactivated. Phosphorylated by EIF2AK3/PERK following unfolded protein response (UPR), promoting dissociation from its cytoplasmic inhibitor KEAP1, followed by its translocation into the nucleus. Phosphorylation of Ser-40 by PKC in response to oxidative stress dissociates NFE2L2 from its cytoplasmic inhibitor KEAP1, promoting its translocation into the nucleus. In terms of processing, acetylation at Lys-595 and Lys-598 increases nuclear localization whereas deacetylation by SIRT1 enhances cytoplasmic presence. Post-translationally, glycation impairs transcription factor activity by preventing heterodimerization with small Maf proteins. Deglycation by FN3K restores activity.

It is found in the cytoplasm. Its subcellular location is the cytosol. It localises to the nucleus. Transcription factor that plays a key role in the response to oxidative stress: binds to antioxidant response (ARE) elements present in the promoter region of many cytoprotective genes, such as phase 2 detoxifying enzymes, and promotes their expression, thereby neutralizing reactive electrophiles. In normal conditions, ubiquitinated and degraded in the cytoplasm by the BCR(KEAP1) complex. In response to oxidative stress, electrophile metabolites inhibit activity of the BCR(KEAP1) complex, promoting nuclear accumulation of NFE2L2/NRF2, heterodimerization with one of the small Maf proteins and binding to ARE elements of cytoprotective target genes. The NFE2L2/NRF2 pathway is also activated in response to selective autophagy: autophagy promotes interaction between KEAP1 and SQSTM1/p62 and subsequent inactivation of the BCR(KEAP1) complex, leading to NFE2L2/NRF2 nuclear accumulation and expression of cytoprotective genes. The NFE2L2/NRF2 pathway is also activated during the unfolded protein response (UPR), contributing to redox homeostasis and cell survival following endoplasmic reticulum stress. May also be involved in the transcriptional activation of genes of the beta-globin cluster by mediating enhancer activity of hypersensitive site 2 of the beta-globin locus control region. Also plays an important role in the regulation of the innate immune response. It is a critical regulator of the innate immune response and survival during sepsis by maintaining redox homeostasis and restraint of the dysregulation of pro-inflammatory signaling pathways like MyD88-dependent and -independent and TNF-alpha signaling. Suppresses macrophage inflammatory response by blocking pro-inflammatory cytokine transcription and the induction of IL6. Binds to the proximity of pro-inflammatory genes in macrophages and inhibits RNA Pol II recruitment. The inhibition is independent of the Nrf2-binding motif and reactive oxygen species level. Represses antiviral cytosolic DNA sensing by suppressing the expression of the adapter protein STING1 and decreasing responsiveness to STING1 agonists while increasing susceptibility to infection with DNA viruses. This chain is Nuclear factor erythroid 2-related factor 2, found in Rattus norvegicus (Rat).